The chain runs to 182 residues: Probable RNA 2'-phosphotransferase (182 aa).

Belongs to the KptA/TPT1 family.

Its function is as follows. Removes the 2'-phosphate from RNA via an intermediate in which the phosphate is ADP-ribosylated by NAD followed by a presumed transesterification to release the RNA and generate ADP-ribose 1''-2''-cyclic phosphate (APPR&gt;P). May function as an ADP-ribosylase. This is Probable RNA 2'-phosphotransferase from Pseudomonas paraeruginosa (strain DSM 24068 / PA7) (Pseudomonas aeruginosa (strain PA7)).